A 705-amino-acid chain; its full sequence is Forkhead box protein P1 (705 aa).

Residues 1 to 19 (MMQESGSETKSNGSAIQNG) show a composition bias toward polar residues. Positions 1–41 (MMQESGSETKSNGSAIQNGSSGGNHLLECGALRDTRSNGEA) are disordered. The residue at position 113 (Ser113) is a Phosphoserine. Disordered stretches follow at residues 267–286 (HTAEETTSSNHSSLDLTSTC) and 291–326 (APSKSSLIMNPHASTNGQLSVHTPKRESLSHEEHPH). Polar residues-rich tracts occupy residues 276–286 (NHSSLDLTSTC) and 291–311 (APSKSSLIMNPHASTNGQLSV). Residues 314–326 (PKRESLSHEEHPH) are compositionally biased toward basic and acidic residues. Residue Lys315 forms a Glycyl lysine isopeptide (Lys-Gly) (interchain with G-Cter in SUMO2) linkage. The C2H2-type zinc finger occupies 334–359 (GVCKWPGCEAVCDDFPAFLKHLNSEH). The segment at 376 to 397 (VQQLELQLAKDKERLQAMMTHL) is leucine-zipper. Residues Lys400 and Lys405 each participate in a glycyl lysine isopeptide (Lys-Gly) (interchain with G-Cter in SUMO2) cross-link. Residues 410 to 414 (PLNLV) are CTBP1-binding. Residues 418–431 (TLSKSASEASPQSL) show a composition bias toward polar residues. A disordered region spans residues 418–450 (TLSKSASEASPQSLPHTPTTPTAPLTPVTQGPS). The segment covering 432-446 (PHTPTTPTAPLTPVT) has biased composition (low complexity). Lys470 is covalently cross-linked (Glycyl lysine isopeptide (Lys-Gly) (interchain with G-Cter in SUMO2)). The segment at residues 493–583 (RPPFTYASLI…PQKISGNPSL (91 aa)) is a DNA-binding region (fork-head). A disordered region spans residues 639 to 705 (EHTNSNESDS…EDEPVNEDME (67 aa)). Residues 640–651 (HTNSNESDSSPG) show a composition bias toward polar residues. Phosphothreonine is present on Thr681. Phosphoserine is present on Ser686. The span at 695 to 705 (YEDEPVNEDME) shows a compositional bias: acidic residues.

As to quaternary structure, forms homodimers and heterodimers with FOXP2 and FOXP4. Dimerization is required for DNA-binding. Self-associates. Interacts with CTBP1. Interacts with NCOR2 and AR. Interacts with FOXP2. Interacts with TBR1. Interacts with AURKA; this interaction facilitates the phosphorylation of FOXP1, which suppresses the expression of FBXL7. Interacts with ZMYM2. Isoform 5 is specifically expressed in embryonic stem cells. Highest expression in the lung, brain, and spleen. Lower expression in heart, skeletal muscle, kidney, small intestine (isoform 3 not present) and liver.

The protein resides in the nucleus. Transcriptional repressor. Can act with CTBP1 to synergistically repress transcription but CTPBP1 is not essential. Plays an important role in the specification and differentiation of lung epithelium. Acts cooperatively with FOXP4 to regulate lung secretory epithelial cell fate and regeneration by restricting the goblet cell lineage program; the function may involve regulation of AGR2. Essential transcriptional regulator of B-cell development. Involved in regulation of cardiac muscle cell proliferation. Involved in the columnar organization of spinal motor neurons. Promotes the formation of the lateral motor neuron column (LMC) and the preganglionic motor column (PGC) and is required for respective appropriate motor axon projections. The segment-appropriate generation of spinal cord motor columns requires cooperation with other Hox proteins. Can regulate PITX3 promoter activity; may promote midbrain identity in embryonic stem cell-derived dopamine neurons by regulating PITX3. Negatively regulates the differentiation of T follicular helper cells T(FH)s. Involved in maintenance of hair follicle stem cell quiescence; the function probably involves regulation of FGF18. Represses transcription of various pro-apoptotic genes and cooperates with NF-kappa B-signaling in promoting B-cell expansion by inhibition of caspase-dependent apoptosis. Binds to CSF1R promoter elements and is involved in regulation of monocyte differentiation and macrophage functions; repression of CSF1R in monocytes seems to involve NCOR2 as corepressor. Involved in endothelial cell proliferation, tube formation and migration indicative for a role in angiogenesis; the role in neovascularization seems to implicate suppression of SEMA5B. Can negatively regulate androgen receptor signaling. Acts as a transcriptional activator of the FBXL7 promoter; this activity is regulated by AURKA. Functionally, involved in transcriptional regulation in embryonic stem cells (ESCs). Stimulates expression of transcription factors that are required for pluripotency and decreases expression of differentiation-associated genes. Has distinct DNA-binding specifities as compared to the canonical form and preferentially binds DNA with the sequence 5'-CGATACAA-3' (or closely related sequences). Promotes ESC self-renewal and pluripotency. The sequence is that of Forkhead box protein P1 (Foxp1) from Mus musculus (Mouse).